A 476-amino-acid chain; its full sequence is Calcium uptake protein 1, mitochondrial (476 aa).

Residues 1–33 (MFRLNSLSALAELAVGSRWYHGGSQPIQIRRRL) constitute a mitochondrion transit peptide. The disordered stretch occupies residues 68–106 (SDIGDKGKNKDEGDVCNHEKKTADLAPHPEEKKKKRSGF). The tract at residues 99–110 (KKKKRSGFRDRK) is polybasic region. Residue serine 122 is modified to Phosphoserine. Residues 126-129 (KIFR) form a k/R-ring region. The EF-hand 1 domain maps to 218 to 253 (TPQRNFEIAFKMFDLNGDGEVDMEEFEQVQSIIRSQ). Residues aspartate 231, asparagine 233, aspartate 235, glutamate 237, and glutamate 242 each coordinate Ca(2+). The interval 259–263 (RHRDR) is k/R-ring. Residues 408–443 (LSDHVCDVVFALFDCDGNGELSNKEFVSIMKQRLMR) form the EF-hand 2 domain. Positions 421, 423, 425, 427, and 432 each coordinate Ca(2+). Arginine 455 bears the Asymmetric dimethylarginine mark. Residues 455 to 465 (RLMQAMWKCAQ) form a C-helix region region.

Belongs to the MICU1 family. MICU1 subfamily. As to quaternary structure, heterodimer; disulfide-linked; heterodimerizes with MICU2 or MICU3. Homodimer; disulfide-linked. Component of the uniplex complex, composed of MCU, EMRE/SMDT1, MICU1 and MICU2 (or MICU3) in a 4:4:1:1 stoichiometry. The composition of calcium sensors within the uniplex complex can differ depending on tissues: a MICU1 homodimer can be present instead of the MICU1-MICU2 heterodimer in skeletal-muscle and kidney. MICU1 is recruited to the uniplex complex by EMRE/SMDT1, and it associates with MCU at low calcium levels, occluding the pore of the MCU channel. Associates with the MICOS complex. Interacts with SLC25A23. Interacts with CHCHD4/MIA40; which introduces the interchain disulfide bond with MICU2. Interacts (when methylated) with UCP2; leading to decrease the calcium sensitivity of MICU1. Phosphorylation at Ser-122 by AKT1 impairs its maturation and stability. In terms of processing, asymmetric dimethylation at Arg-455 by PRMT1 decreases the calcium sensitivity of MICU1 by promoting interaction with UCP2. Post-translationally, degraded by YME1L1 when not complexed as homodimer or heterodimer. Not degraded when complexed as homodimer or heterodimer; the presence of the interchain disulfide bond protecting MICU1 from degradation by YME1L1. In terms of tissue distribution, expressed in epithelial cell lines. Strongly expressed in epidermal keratinocytes and dermal endothelial cells.

Its subcellular location is the mitochondrion intermembrane space. It is found in the mitochondrion inner membrane. With respect to regulation, activated by spermine, kaempferol and SB202190, which bind MICU1 and prevent MCU pore occlusion in absence of calcium. In terms of biological role, calcium sensor of the mitochondrial calcium uniporter (MCU) channel, which senses calcium level via its EF-hand domains. MICU1 and MICU2 (or MICU3) form a disulfide-linked heterodimer that stimulates and inhibits MCU activity, depending on the concentration of calcium. At low calcium levels, MICU1 occludes the pore of the MCU channel, preventing mitochondrial calcium uptake. At higher calcium levels, calcium-binding to MICU1 and MICU2 (or MICU3) induces a conformational change that weakens MCU-MICU1 interactions and moves the MICU1-MICU2 heterodimer away from the pore, allowing calcium permeation through the MCU channel. Also required to protect against manganese toxicity by preventing manganese uptake by MCU: mechanistically, manganese-binding to its EF-hand domains does not induce any conformational change, maintaining MCU pore occlusion. Also acts as a barrier for inhibitors of the MCU channel, such as ruthenium red or its derivative Ru360. Acts as a regulator of mitochondrial cristae structure independently of its ability to regulate the mitochondrial calcium uniporter channel. Regulates glucose-dependent insulin secretion in pancreatic beta-cells by regulating mitochondrial calcium uptake. Induces T-helper 1-mediated autoreactivity, which is accompanied by the release of IFNG. Isoform that regulates mitochondrial calcium uniporter (MCU) in the skeletal muscle. Compared to other isoforms, this isoform has higher affinity for calcium, promoting mitochondrial calcium uptake at lower calcium concentrations. This allows a rapid response of mitochondrial metabolism and ensures sustained ATP production needed for resistance and strenuous exercise. This chain is Calcium uptake protein 1, mitochondrial, found in Homo sapiens (Human).